The primary structure comprises 92 residues: YcgL domain-containing protein HS_0805 (92 aa).

Residues 1-85 (MLCAIYKTKR…QQENLLEQER (85 aa)) enclose the YcgL domain.

This Histophilus somni (strain 129Pt) (Haemophilus somnus) protein is YcgL domain-containing protein HS_0805.